A 309-amino-acid polypeptide reads, in one-letter code: Metal ABC transporter substrate-binding lipoprotein FimA (309 aa).

The first 20 residues, M1–A20, serve as a signal peptide directing secretion. C21 is lipidated: N-palmitoyl cysteine. C21 carries the S-diacylglycerol cysteine lipid modification. H67, H139, E205, and D280 together coordinate a divalent metal cation.

It belongs to the bacterial solute-binding protein 9 family. Lipoprotein receptor antigen (Lrai) subfamily.

It is found in the cell membrane. In terms of biological role, part of an ATP-binding cassette (ABC) transport system involved in metal import. Binds a metal with high affinity and specificity and delivers it to the membrane permease for translocation into the cytoplasm. Also acts as an adhesin which is involved on adherence to extracellular matrix. It is an important factor in pathogenesis and infection. May contribute to the formation and accumulation of dental plaque. The protein is Metal ABC transporter substrate-binding lipoprotein FimA (fimA) of Streptococcus parasanguinis.